The following is an 805-amino-acid chain: Leucine--tRNA ligase (805 aa).

Positions 40–51 (PYPSGAGLHVGH) match the 'HIGH' region motif. A 'KMSKS' region motif is present at residues 576–580 (KMSKS). K579 is a binding site for ATP.

It belongs to the class-I aminoacyl-tRNA synthetase family.

The protein localises to the cytoplasm. It catalyses the reaction tRNA(Leu) + L-leucine + ATP = L-leucyl-tRNA(Leu) + AMP + diphosphate. This Brevibacillus brevis (strain 47 / JCM 6285 / NBRC 100599) protein is Leucine--tRNA ligase.